The sequence spans 465 residues: RuvB-like helicase 2 (465 aa).

72–79 (GPPSTGKT) serves as a coordination point for ATP.

Belongs to the RuvB family. In terms of assembly, may form heterododecamers with RVB1. Component of the SWR1 chromatin remodeling complex, the INO80 chromatin remodeling complex, and of the R2TP complex. Interacts with dil1.

The protein resides in the nucleus. The enzyme catalyses ATP + H2O = ADP + phosphate + H(+). Functionally, DNA helicase which participates in several chromatin remodeling complexes, including the SWR1 and the INO80 complexes. The SWR1 complex mediates the ATP-dependent exchange of histone H2A for the H2A variant HZT1 leading to transcriptional regulation of selected genes by chromatin remodeling. The INO80 complex remodels chromatin by shifting nucleosomes and is involved in DNA repair. Also involved in pre-rRNA processing. The protein is RuvB-like helicase 2 (rvb2) of Schizosaccharomyces pombe (strain 972 / ATCC 24843) (Fission yeast).